The sequence spans 506 residues: (+)-piperitol/(+)-sesamin synthase CYP81Q2 (506 aa).

The chain crosses the membrane as a helical span at residues 3–23 (AEMLYSALALTFAIFMVYRIL). Residue cysteine 439 coordinates heme.

The protein belongs to the cytochrome P450 family. Heme is required as a cofactor. Expressed in seeds.

It is found in the membrane. It carries out the reaction (+)-piperitol + reduced [NADPH--hemoprotein reductase] + O2 = (+)-sesamin + oxidized [NADPH--hemoprotein reductase] + 2 H2O + H(+). The catalysed reaction is (+)-pinoresinol + reduced [NADPH--hemoprotein reductase] + O2 = (+)-piperitol + oxidized [NADPH--hemoprotein reductase] + 2 H2O + H(+). Involved in the biosynthesis of (+)-sesamin, a furofuran class lignan. Functions in a dual catalytic mode. Catalyzes the synthesis of (+)-sesamin from (+)- pinoresinol by formation of two successive methylenedioxy bridges on (+)-pinoresinol and (+)-piperitol, respectively. The polypeptide is (+)-piperitol/(+)-sesamin synthase CYP81Q2 (Sesamum radiatum (Black benniseed)).